A 297-amino-acid polypeptide reads, in one-letter code: MEDYTKIEKIGEGTYGVVYKGRHKTTGQVVAMKKIRLESEEEGVPSTAIREISLLKELRHPNIVSLQDVLMQDSRLYLIFEFLSMDLKKYLDSIPPGQFMDSSLVKSYLYQILQGIVFCHSRRVLHRDLKPQNLLIDDKGTIKLADFGLARAFGIPIRVYTHEVVTLWYRSPEVLLGSARYSTPVDIWSIGTIFAELATKKPLFHGDSEIDQLFRIFRALGTPNNEVWPEVESLQDYKSTFPKWKPGSLASHVKNLDENGLDLLSKMLIYDPAKRISGKMALNHPYFNDLDSQIKKM.

M1 is modified (N-acetylmethionine). At Y4 the chain carries Phosphotyrosine; by PKR. Positions 4–287 (YTKIEKIGEG…GKMALNHPYF (284 aa)) constitute a Protein kinase domain. N6-acetyllysine; alternate is present on residues K6 and K9. Residues K6 and K9 each participate in a glycyl lysine isopeptide (Lys-Gly) (interchain with G-Cter in SUMO2); alternate cross-link. 10-18 (IGEGTYGVV) provides a ligand contact to ATP. T14 carries the phosphothreonine; by PKMYT1 modification. Y15 carries the phosphotyrosine; by PKMYT1, WEE1 and WEE2 modification. Position 15 is a phosphotyrosine; by WEE1 and WEE2 (Y15). Y19 is subject to Phosphotyrosine. K20 participates in a covalent cross-link: Glycyl lysine isopeptide (Lys-Gly) (interchain with G-Cter in SUMO2). K33 provides a ligand contact to ATP. S39 is modified (phosphoserine). Position 77 is a phosphotyrosine (Y77). Catalysis depends on D128, which acts as the Proton acceptor. Residue K139 forms a Glycyl lysine isopeptide (Lys-Gly) (interchain with G-Cter in SUMO2) linkage. A Phosphothreonine modification is found at T141. T161 is subject to Phosphothreonine; by CAK. Residue S178 is modified to Phosphoserine. T222 bears the Phosphothreonine mark. K245 bears the N6-succinyllysine mark. S248 is modified (phosphoserine).

This sequence belongs to the protein kinase superfamily. CMGC Ser/Thr protein kinase family. CDC2/CDKX subfamily. As to quaternary structure, forms a stable but non-covalent complex with a regulatory subunit and with a cyclin. Interacts with cyclins-B (CCNB1, CCNB2 and CCNB3) to form a serine/threonine kinase holoenzyme complex also known as maturation promoting factor (MPF). The cyclin subunit imparts substrate specificity to the complex. Can also form CDK1-cylin-D and CDK1-cyclin-E complexes that phosphorylate RB1 in vitro. Binds to RB1 and other transcription factors such as FOXO1 and RUNX2. Promotes G2-M transition when in complex with a cyclin-B. Interacts with DLGAP5. Binds to the CDK inhibitors CDKN1A/p21 and CDKN1B/p27. Isoform 2 is unable to complex with cyclin-B1 and also fails to bind to CDKN1A/p21. Interacts with catalytically active CCNB1 and RALBP1 during mitosis to form an endocytotic complex during interphase. Associates with cyclins-A and B1 during S-phase in regenerating hepatocytes. Interacts with FANCC. Interacts with CEP63; this interaction recruits CDK1 to centrosomes. Interacts with CENPA. Interacts with NR1D1. Phosphorylation at Thr-161 by CAK/CDK7 activates kinase activity. Phosphorylation at Thr-14 and Tyr-15 by PKMYT1 prevents nuclear translocation. Phosphorylation at Tyr-15 by WEE1 and WEE2 inhibits the protein kinase activity and acts as a negative regulator of entry into mitosis (G2 to M transition). Phosphorylation by PKMYT1 and WEE1 takes place during mitosis to keep CDK1-cyclin-B complexes inactive until the end of G2. By the end of G2, PKMYT1 and WEE1 are inactivated, but CDC25A and CDC25B are activated. Dephosphorylation by active CDC25A and CDC25B at Thr-14 and Tyr-15, leads to CDK1 activation at the G2-M transition. Phosphorylation at Tyr-15 by WEE2 during oogenesis is required to maintain meiotic arrest in oocytes during the germinal vesicle (GV) stage, a long period of quiescence at dictyate prophase I, leading to prevent meiotic reentry. Phosphorylation by WEE2 is also required for metaphase II exit during egg activation to ensure exit from meiosis in oocytes and promote pronuclear formation. Phosphorylated at Tyr-4 by PKR/EIF2AK2 upon genotoxic stress. This phosphorylation triggers CDK1 polyubiquitination and subsequent proteolysis, thus leading to G2 arrest. In terms of processing, polyubiquitinated upon genotoxic stress.

The protein resides in the nucleus. It is found in the cytoplasm. Its subcellular location is the mitochondrion. The protein localises to the cytoskeleton. It localises to the microtubule organizing center. The protein resides in the centrosome. It is found in the spindle. The enzyme catalyses L-seryl-[protein] + ATP = O-phospho-L-seryl-[protein] + ADP + H(+). It catalyses the reaction L-threonyl-[protein] + ATP = O-phospho-L-threonyl-[protein] + ADP + H(+). The catalysed reaction is [DNA-directed RNA polymerase] + ATP = phospho-[DNA-directed RNA polymerase] + ADP + H(+). Its activity is regulated as follows. Phosphorylation at Thr-14 or Tyr-15 inactivates the enzyme, while phosphorylation at Thr-161 activates it. Activated through a multistep process; binding to cyclin-B is required for relocation of cyclin-kinase complexes to the nucleus, activated by CAK/CDK7-mediated phosphorylation on Thr-161, and CDC25-mediated dephosphorylation of inhibitory phosphorylation on Thr-14 and Tyr-15. Activity is restricted during S-phase in an ATR-dependent manner to prevent premature entry into G2. Repressed by the CDK inhibitors CDKN1A/p21 and CDKN1B/p27 during the G1 phase and by CDKN1A/p21 at the G1-S checkpoint upon DNA damage. Transient activation by rapid and transient dephosphorylation at Tyr-15 triggered by TGFB1. Functionally, plays a key role in the control of the eukaryotic cell cycle by modulating the centrosome cycle as well as mitotic onset; promotes G2-M transition via association with multiple interphase cyclins. Phosphorylates PARVA/actopaxin, APC, AMPH, APC, BARD1, Bcl-xL/BCL2L1, BRCA2, CALD1, CASP8, CDC7, CDC20, CDC25A, CDC25C, CC2D1A, CENPA, CSNK2 proteins/CKII, FZR1/CDH1, CDK7, CEBPB, CHAMP1, DMD/dystrophin, EEF1 proteins/EF-1, EZH2, KIF11/EG5, EGFR, FANCG, FOS, GFAP, GOLGA2/GM130, GRASP1, UBE2A/hHR6A, HIST1H1 proteins/histone H1, HMGA1, HIVEP3/KRC, KAT5, LMNA, LMNB, LBR, LATS1, MAP1B, MAP4, MARCKS, MCM2, MCM4, MKLP1, MLST8, MYB, NEFH, NFIC, NPC/nuclear pore complex, PITPNM1/NIR2, NPM1, NCL, NUCKS1, NPM1/numatrin, ORC1, PRKAR2A, EEF1E1/p18, EIF3F/p47, p53/TP53, NONO/p54NRB, PAPOLA, PLEC/plectin, RB1, TPPP, UL40/R2, RAB4A, RAP1GAP, RBBP8/CtIP, RCC1, RPS6KB1/S6K1, KHDRBS1/SAM68, ESPL1, SKI, BIRC5/survivin, STIP1, TEX14, beta-tubulins, MAPT/TAU, NEDD1, VIM/vimentin, TK1, FOXO1, RUNX1/AML1, SAMHD1, SIRT2, CGAS and RUNX2. CDK1/CDC2-cyclin-B controls pronuclear union in interphase fertilized eggs. Essential for early stages of embryonic development. During G2 and early mitosis, CDC25A/B/C-mediated dephosphorylation activates CDK1/cyclin complexes which phosphorylate several substrates that trigger at least centrosome separation, Golgi dynamics, nuclear envelope breakdown and chromosome condensation. Once chromosomes are condensed and aligned at the metaphase plate, CDK1 activity is switched off by WEE1- and PKMYT1-mediated phosphorylation to allow sister chromatid separation, chromosome decondensation, reformation of the nuclear envelope and cytokinesis. Phosphorylates KRT5 during prometaphase and metaphase. Inactivated by PKR/EIF2AK2- and WEE1-mediated phosphorylation upon DNA damage to stop cell cycle and genome replication at the G2 checkpoint thus facilitating DNA repair. Reactivated after successful DNA repair through WIP1-dependent signaling leading to CDC25A/B/C-mediated dephosphorylation and restoring cell cycle progression. Catalyzes lamin (LMNA, LMNB1 and LMNB2) phosphorylation at the onset of mitosis, promoting nuclear envelope breakdown. In proliferating cells, CDK1-mediated FOXO1 phosphorylation at the G2-M phase represses FOXO1 interaction with 14-3-3 proteins and thereby promotes FOXO1 nuclear accumulation and transcription factor activity, leading to cell death of postmitotic neurons. The phosphorylation of beta-tubulins regulates microtubule dynamics during mitosis. NEDD1 phosphorylation promotes PLK1-mediated NEDD1 phosphorylation and subsequent targeting of the gamma-tubulin ring complex (gTuRC) to the centrosome, an important step for spindle formation. In addition, CC2D1A phosphorylation regulates CC2D1A spindle pole localization and association with SCC1/RAD21 and centriole cohesion during mitosis. The phosphorylation of Bcl-xL/BCL2L1 after prolongated G2 arrest upon DNA damage triggers apoptosis. In contrast, CASP8 phosphorylation during mitosis prevents its activation by proteolysis and subsequent apoptosis. This phosphorylation occurs in cancer cell lines, as well as in primary breast tissues and lymphocytes. EZH2 phosphorylation promotes H3K27me3 maintenance and epigenetic gene silencing. CALD1 phosphorylation promotes Schwann cell migration during peripheral nerve regeneration. CDK1-cyclin-B complex phosphorylates NCKAP5L and mediates its dissociation from centrosomes during mitosis. Regulates the amplitude of the cyclic expression of the core clock gene BMAL1 by phosphorylating its transcriptional repressor NR1D1, and this phosphorylation is necessary for SCF(FBXW7)-mediated ubiquitination and proteasomal degradation of NR1D1. Phosphorylates EML3 at 'Thr-881' which is essential for its interaction with HAUS augmin-like complex and TUBG1. Phosphorylates CGAS during mitosis, leading to its inhibition, thereby preventing CGAS activation by self DNA during mitosis. Phosphorylates SKA3 during mitosis which promotes SKA3 binding to the NDC80 complex and anchoring of the SKA complex to kinetochores, to enable stable attachment of mitotic spindle microtubules to kinetochores. The protein is Cyclin-dependent kinase 1 (CDK1) of Bos taurus (Bovine).